A 296-amino-acid polypeptide reads, in one-letter code: Class E basic helix-loop-helix protein 22 (296 aa).

Residues 26–70 are disordered; the sequence is SAFRPPQGLDLSQPGDRSPLHCYDGPDPSDLLRHHQHHHQASSGA. Residues 153 to 207 enclose the bHLH domain; that stretch reads TLRLNINARERRRMHDLNDALDELRAVIPYAHSPSVRKLSKIATLLLAKNYILMQ.

The protein localises to the nucleus. Its function is as follows. May act as a transcriptional repressor. The polypeptide is Class E basic helix-loop-helix protein 22 (bhlhe22) (Xenopus tropicalis (Western clawed frog)).